Consider the following 393-residue polypeptide: Outer membrane protein assembly factor BamB (393 aa).

The first 19 residues, Met-1–Gly-19, serve as a signal peptide directing secretion. Cys-20 carries N-palmitoyl cysteine lipidation. Cys-20 carries S-diacylglycerol cysteine lipidation.

Belongs to the BamB family. As to quaternary structure, part of the Bam complex, which is composed of the outer membrane protein BamA, and four lipoproteins BamB, BamC, BamD and BamE.

The protein resides in the cell outer membrane. Part of the outer membrane protein assembly complex, which is involved in assembly and insertion of beta-barrel proteins into the outer membrane. The sequence is that of Outer membrane protein assembly factor BamB from Yersinia pestis.